A 185-amino-acid polypeptide reads, in one-letter code: Elongation factor P (185 aa).

Belongs to the elongation factor P family.

It is found in the cytoplasm. It participates in protein biosynthesis; polypeptide chain elongation. Functionally, involved in peptide bond synthesis. Stimulates efficient translation and peptide-bond synthesis on native or reconstituted 70S ribosomes in vitro. Probably functions indirectly by altering the affinity of the ribosome for aminoacyl-tRNA, thus increasing their reactivity as acceptors for peptidyl transferase. The protein is Elongation factor P of Methylobacillus flagellatus (strain ATCC 51484 / DSM 6875 / VKM B-1610 / KT).